Consider the following 1395-residue polypeptide: DNA-directed RNA polymerase subunit beta' (1395 aa).

Zn(2+)-binding residues include cysteine 70, cysteine 72, cysteine 85, and cysteine 88. The Mg(2+) site is built by aspartate 460, aspartate 462, and aspartate 464. Cysteine 814, cysteine 888, cysteine 895, and cysteine 898 together coordinate Zn(2+).

This sequence belongs to the RNA polymerase beta' chain family. In terms of assembly, the RNAP catalytic core consists of 2 alpha, 1 beta, 1 beta' and 1 omega subunit. When a sigma factor is associated with the core the holoenzyme is formed, which can initiate transcription. Mg(2+) is required as a cofactor. Zn(2+) serves as cofactor.

The enzyme catalyses RNA(n) + a ribonucleoside 5'-triphosphate = RNA(n+1) + diphosphate. In terms of biological role, DNA-dependent RNA polymerase catalyzes the transcription of DNA into RNA using the four ribonucleoside triphosphates as substrates. The chain is DNA-directed RNA polymerase subunit beta' from Pseudoalteromonas atlantica (strain T6c / ATCC BAA-1087).